The primary structure comprises 467 residues: ATP synthase subunit beta (467 aa).

157 to 164 (GGAGVGKT) contacts ATP.

The protein belongs to the ATPase alpha/beta chains family. In terms of assembly, F-type ATPases have 2 components, CF(1) - the catalytic core - and CF(0) - the membrane proton channel. CF(1) has five subunits: alpha(3), beta(3), gamma(1), delta(1), epsilon(1). CF(0) has three main subunits: a(1), b(2) and c(9-12). The alpha and beta chains form an alternating ring which encloses part of the gamma chain. CF(1) is attached to CF(0) by a central stalk formed by the gamma and epsilon chains, while a peripheral stalk is formed by the delta and b chains.

It localises to the cell inner membrane. The catalysed reaction is ATP + H2O + 4 H(+)(in) = ADP + phosphate + 5 H(+)(out). In terms of biological role, produces ATP from ADP in the presence of a proton gradient across the membrane. The catalytic sites are hosted primarily by the beta subunits. This is ATP synthase subunit beta from Desulfosudis oleivorans (strain DSM 6200 / JCM 39069 / Hxd3) (Desulfococcus oleovorans).